Here is a 166-residue protein sequence, read N- to C-terminus: Small ribosomal subunit protein uS5 (166 aa).

The region spanning 11–74 (LNEKLIAVNR…EKARRNMFTI (64 aa)) is the S5 DRBM domain.

The protein belongs to the universal ribosomal protein uS5 family. Part of the 30S ribosomal subunit. Contacts proteins S4 and S8.

Functionally, with S4 and S12 plays an important role in translational accuracy. Its function is as follows. Located at the back of the 30S subunit body where it stabilizes the conformation of the head with respect to the body. The sequence is that of Small ribosomal subunit protein uS5 from Aliivibrio fischeri (strain ATCC 700601 / ES114) (Vibrio fischeri).